Reading from the N-terminus, the 196-residue chain is MSRYRGPRLKKIRRLGALLGLTRKTPKSGSNPKKKFHSGKKEQYRIRLQEKQKLRFHYGLTERQLLRYVYIAGKAKRSTGQVLLQLLEMRLDNILFRLGMASTIPGARQLVNHRHILVNGRIVNIPSFRCKPRDIITTKDNQRSKGLVQNSIASSDPGKLPKHLTIDTLEYKGLVNKILDRKWVGLKINELLVVEY.

The disordered stretch occupies residues 22–42 (TRKTPKSGSNPKKKFHSGKKE). The 81-residue stretch at 89–169 (MRLDNILFRL…LPKHLTIDTL (81 aa)) folds into the S4 RNA-binding domain.

The protein belongs to the universal ribosomal protein uS4 family. As to quaternary structure, part of the 30S ribosomal subunit. Contacts protein S5. The interaction surface between S4 and S5 is involved in control of translational fidelity.

Its subcellular location is the plastid. It localises to the chloroplast. Functionally, one of the primary rRNA binding proteins, it binds directly to 16S rRNA where it nucleates assembly of the body of the 30S subunit. Its function is as follows. With S5 and S12 plays an important role in translational accuracy. This Melica altissima (Siberian melic grass) protein is Small ribosomal subunit protein uS4c (rps4).